A 275-amino-acid polypeptide reads, in one-letter code: MQNITDSWFVQGMIKATSDAWLKGWDERNGGNLTLRLDEADIAPFAANFHEKPRYIALSQPMPLLANTPFIVTGSGKFFRNVQLDPAANLGVVKIDSDGAGYHILWGLTHDAVPTSELPAHFLSHCERIKATHGKDRVIMHCHATNLIALTYVLENNTALITRKLWEGSTECLVVFPDGVGILPWMVPGTDEIGQATAQEMQKHSLVLWPFHGVFGSGPTLDETFGLIDTAEKSAEVLVKIYSMGGMKQTITREELVALGKRFGVTPLASAVALY.

Glutamate 117 is a catalytic residue. Histidine 141, histidine 143, and histidine 212 together coordinate Zn(2+).

Belongs to the aldolase class II family. RhaD subfamily. Homotetramer. The cofactor is Zn(2+).

Its subcellular location is the cytoplasm. It carries out the reaction L-rhamnulose 1-phosphate = (S)-lactaldehyde + dihydroxyacetone phosphate. The protein operates within carbohydrate degradation; L-rhamnose degradation; glycerone phosphate from L-rhamnose: step 3/3. Functionally, catalyzes the reversible cleavage of L-rhamnulose-1-phosphate to dihydroxyacetone phosphate (DHAP) and L-lactaldehyde. In Salmonella heidelberg (strain SL476), this protein is Rhamnulose-1-phosphate aldolase.